A 541-amino-acid chain; its full sequence is MDSRRSLLVIALLFISFLVYQQWQLDYHTPKPVATEQVKVSSDVPASSASSSSDIATTAQAQGRIITLENDVFRLEVDTLGGDVVHSELLKYDAELNSNTPFTLLTNKANHVYIAQSGLVGKDGIDTKAGRANYQVDGDTFKLADGQNELAVPFVFEKDGVTFRKIFVLKRGAYDIAVNFEIDNQSDKTIEVEPYGQLRHTLVEDTGNVAMPTYTGGAYSSSETNYKKYSFADMEKANLSISTKAGWVAVLQHYFVSAWIPNQDADNQLYSLTDKANNLASIGYRGPVTAIPAGAKETIRSSLWTGPKLQDQMATVANHLDLSVDYGWAWFIAKPLFWLLTFIQSIVQNWGLAIIGVTLVVKAILYPLTKAQYTSMAKMRMLQPKLQEMRERFGEDRQRMSQEMMKLYKEEKVNPLGGCLPILLQMPIFIALYWTFLEAVELRHAPFFGWIQDLSAQDPYYILPILMGASMFLLQKMSPTPVADPTQQKIMNFMPLIFMVFFLWFPSGLVLYWLVSNLITIAQQQLIYRGLEKKGLHSRHK.

5 consecutive transmembrane segments (helical) span residues 7–27 (LLVI…QLDY), 346–368 (IVQN…LYPL), 416–436 (LGGC…YWTF), 454–474 (LSAQ…MFLL), and 495–515 (PLIF…YWLV).

The protein belongs to the OXA1/ALB3/YidC family. Type 1 subfamily. As to quaternary structure, interacts with the Sec translocase complex via SecD. Specifically interacts with transmembrane segments of nascent integral membrane proteins during membrane integration.

It is found in the cell inner membrane. In terms of biological role, required for the insertion and/or proper folding and/or complex formation of integral membrane proteins into the membrane. Involved in integration of membrane proteins that insert both dependently and independently of the Sec translocase complex, as well as at least some lipoproteins. Aids folding of multispanning membrane proteins. The sequence is that of Membrane protein insertase YidC from Pasteurella multocida (strain Pm70).